A 470-amino-acid chain; its full sequence is Glutathione reductase (470 aa).

FAD contacts are provided by serine 16 and glycine 17. Serine 16 lines the glutathione pocket. Arginine 23 contacts glutathione. The FAD site is built by glutamate 36, threonine 43, cysteine 44, and lysine 52. A disulfide bond links cysteine 44 and cysteine 49. A glutathione-binding site is contributed by tyrosine 104. Alanine 120 is an FAD binding site. 5 residues coordinate NADP(+): glycine 190, isoleucine 193, glutamate 196, arginine 213, and arginine 219. Threonine 228 provides a ligand contact to glutathione. Residue glycine 280 participates in NADP(+) binding. Aspartate 321 contributes to the FAD binding site. Glutamate 327 contacts NADP(+). Threonine 329 contributes to the FAD binding site. Arginine 337 serves as a coordination point for glutathione. Residue alanine 362 coordinates NADP(+). Lysine 412 serves as a coordination point for glutathione. Histidine 459 serves as a coordination point for FAD. Catalysis depends on histidine 459, which acts as the Proton acceptor.

The protein belongs to the class-I pyridine nucleotide-disulfide oxidoreductase family. Homodimer. It depends on FAD as a cofactor.

It localises to the cytoplasm. It is found in the mitochondrion. The enzyme catalyses 2 glutathione + NADP(+) = glutathione disulfide + NADPH + H(+). In terms of biological role, catalyzes the reduction of glutathione disulfide (GSSG) to reduced glutathione (GSH). Constitutes the major mechanism to maintain a high GSH:GSSG ratio in the cytosol. The chain is Glutathione reductase (GLR1) from Yarrowia lipolytica (strain CLIB 122 / E 150) (Yeast).